The sequence spans 487 residues: Betaine aldehyde dehydrogenase (487 aa).

Residues isoleucine 27 and aspartate 93 each contribute to the K(+) site. 149–151 lines the NAD(+) pocket; sequence GAW. Lysine 161 acts as the Charge relay system in catalysis. NAD(+) contacts are provided by residues 175 to 178 and 228 to 231; these read KPSE and SVPT. Leucine 243 lines the K(+) pocket. The Proton acceptor role is filled by glutamate 249. 3 residues coordinate NAD(+): glycine 251, cysteine 283, and glutamate 384. Cysteine 283 functions as the Nucleophile in the catalytic mechanism. The residue at position 283 (cysteine 283) is a Cysteine sulfenic acid (-SOH). Lysine 454 and glycine 457 together coordinate K(+). Glutamate 461 acts as the Charge relay system in catalysis.

This sequence belongs to the aldehyde dehydrogenase family. As to quaternary structure, dimer of dimers. K(+) serves as cofactor.

The enzyme catalyses betaine aldehyde + NAD(+) + H2O = glycine betaine + NADH + 2 H(+). Its pathway is amine and polyamine biosynthesis; betaine biosynthesis via choline pathway; betaine from betaine aldehyde: step 1/1. Functionally, involved in the biosynthesis of the osmoprotectant glycine betaine. Catalyzes the irreversible oxidation of betaine aldehyde to the corresponding acid. In Brucella melitensis biotype 2 (strain ATCC 23457), this protein is Betaine aldehyde dehydrogenase.